We begin with the raw amino-acid sequence, 60 residues long: UPF0434 protein KPN78578_09190 (60 aa).

Belongs to the UPF0434 family.

The polypeptide is UPF0434 protein KPN78578_09190 (Klebsiella pneumoniae subsp. pneumoniae (strain ATCC 700721 / MGH 78578)).